Here is a 353-residue protein sequence, read N- to C-terminus: uncharacterized protein (353 aa).

The first 28 residues, 1–28 (MHLTIMRRFAVLLLLAIFLGGCSGSNGA), serve as a signal peptide directing secretion.

This is an uncharacterized protein from Archaeoglobus fulgidus (strain ATCC 49558 / DSM 4304 / JCM 9628 / NBRC 100126 / VC-16).